An 882-amino-acid chain; its full sequence is Valine--tRNA ligase (882 aa).

Positions 48 to 58 (PNVTGKLHLGH) match the 'HIGH' region motif. The 'KMSKS' region signature appears at 524-528 (KMSKS). Residue K527 participates in ATP binding. Residues 809 to 882 (LAELLDLDEE…KRLAELKAAR (74 aa)) are a coiled coil. The disordered stretch occupies residues 844–866 (GFTDRAPEKVVQEERDKQADYEQ). Residues 845-863 (FTDRAPEKVVQEERDKQAD) show a composition bias toward basic and acidic residues.

The protein belongs to the class-I aminoacyl-tRNA synthetase family. ValS type 1 subfamily. As to quaternary structure, monomer.

Its subcellular location is the cytoplasm. It catalyses the reaction tRNA(Val) + L-valine + ATP = L-valyl-tRNA(Val) + AMP + diphosphate. In terms of biological role, catalyzes the attachment of valine to tRNA(Val). As ValRS can inadvertently accommodate and process structurally similar amino acids such as threonine, to avoid such errors, it has a 'posttransfer' editing activity that hydrolyzes mischarged Thr-tRNA(Val) in a tRNA-dependent manner. In Latilactobacillus sakei subsp. sakei (strain 23K) (Lactobacillus sakei subsp. sakei), this protein is Valine--tRNA ligase.